The primary structure comprises 339 residues: Phosphate acyltransferase (339 aa).

It belongs to the PlsX family. In terms of assembly, homodimer. Probably interacts with PlsY.

It localises to the cytoplasm. It catalyses the reaction a fatty acyl-[ACP] + phosphate = an acyl phosphate + holo-[ACP]. Its pathway is lipid metabolism; phospholipid metabolism. Its function is as follows. Catalyzes the reversible formation of acyl-phosphate (acyl-PO(4)) from acyl-[acyl-carrier-protein] (acyl-ACP). This enzyme utilizes acyl-ACP as fatty acyl donor, but not acyl-CoA. The chain is Phosphate acyltransferase from Helicobacter pylori (strain Shi470).